A 95-amino-acid polypeptide reads, in one-letter code: Lipolysis-activating peptide 1-beta chain (95 aa).

An N-terminal signal peptide occupies residues Met-1–Gly-22. Residues Gly-23–Pro-91 form the LCN-type CS-alpha/beta domain. 3 cysteine pairs are disulfide-bonded: Cys-37-Cys-60, Cys-45-Cys-70, and Cys-49-Cys-72.

As to quaternary structure, homodimer; disulfide-linked or monomer (edited version) or heterodimer of an alpha chain (AC P84810) and this beta chain (non-edited version). As to expression, expressed by the venom gland.

The protein localises to the secreted. In terms of biological role, the homodimer inhibits HMG-CoA reductase (HMGCR) (32% of inhibition produced by 0.6 uM), a glycoprotein involved in the control of cholesterol biosynthesis. The inhibitory effects of bumarsin are seen at much lower concentrations (0.6 uM) than that for statins such as atorvastatin (5 mM) and simvastatin (10 uM). In addition to inhibition of HMG-CoA reductase, this protein lowers cholesterol levels by inducing steroid hormone synthesis via StAR, and by increasing reverse cholesterol transport mediated by the induction of ABCA1 and APOA1. The heterodimer non-edited LVP1 induces lipolysis in rat adipocytes. Induction of lipolysis by LVP1 appears to be mediated through the beta-2 adrenergic receptor pathway (ADRB2). Intracerebroventricular injection is not toxic to mice. Its function is as follows. The monomer edited version, similar to alpha-toxins, may modulate voltage-gated sodium channels (Nav) and may block voltage-gated potassium channels (Kv). In Buthus occitanus tunetanus (Common European scorpion), this protein is Lipolysis-activating peptide 1-beta chain.